Reading from the N-terminus, the 208-residue chain is Large ribosomal subunit protein uL3 (208 aa).

Positions 116–148 (GFQGVIKRHGQSRGPMAHGSRYHRRPGSMGPVA) are disordered.

The protein belongs to the universal ribosomal protein uL3 family. As to quaternary structure, part of the 50S ribosomal subunit. Forms a cluster with proteins L14 and L19.

Its function is as follows. One of the primary rRNA binding proteins, it binds directly near the 3'-end of the 23S rRNA, where it nucleates assembly of the 50S subunit. This is Large ribosomal subunit protein uL3 from Streptococcus pyogenes serotype M5 (strain Manfredo).